A 275-amino-acid polypeptide reads, in one-letter code: Phosphate import ATP-binding protein PstB 1 (275 aa).

The 240-residue stretch at 22–261 folds into the ABC transporter domain; it reads IETRDLSVYY…DRTEKIFNSP (240 aa). Position 54–61 (54–61) interacts with ATP; sequence GPSGCGKS.

This sequence belongs to the ABC transporter superfamily. Phosphate importer (TC 3.A.1.7) family. As to quaternary structure, the complex is composed of two ATP-binding proteins (PstB), two transmembrane proteins (PstC and PstA) and a solute-binding protein (PstS).

It localises to the cell inner membrane. The catalysed reaction is phosphate(out) + ATP + H2O = ADP + 2 phosphate(in) + H(+). In terms of biological role, part of the ABC transporter complex PstSACB involved in phosphate import. Responsible for energy coupling to the transport system. In Synechococcus sp. (strain JA-3-3Ab) (Cyanobacteria bacterium Yellowstone A-Prime), this protein is Phosphate import ATP-binding protein PstB 1.